Here is a 145-residue protein sequence, read N- to C-terminus: Ribosomal RNA large subunit methyltransferase H (145 aa).

S-adenosyl-L-methionine contacts are provided by residues L64, G93, and 112–117; that span reads LSPLTF.

Belongs to the RNA methyltransferase RlmH family. In terms of assembly, homodimer.

It is found in the cytoplasm. It carries out the reaction pseudouridine(1915) in 23S rRNA + S-adenosyl-L-methionine = N(3)-methylpseudouridine(1915) in 23S rRNA + S-adenosyl-L-homocysteine + H(+). Its function is as follows. Specifically methylates the pseudouridine at position 1915 (m3Psi1915) in 23S rRNA. This is Ribosomal RNA large subunit methyltransferase H from Prochlorococcus marinus (strain NATL1A).